The following is a 569-amino-acid chain: Urease subunit alpha (569 aa).

A Urease domain is found at 131–569; sequence GGIDTHIHFI…LPLAQRYLLL (439 aa). Positions 136, 138, and 219 each coordinate Ni(2+). The residue at position 219 (K219) is an N6-carboxylysine. H221 provides a ligand contact to substrate. Ni(2+) is bound by residues H248 and H274. H322 serves as the catalytic Proton donor. D362 is a Ni(2+) binding site.

Belongs to the metallo-dependent hydrolases superfamily. Urease alpha subunit family. In terms of assembly, heterotrimer of UreA (gamma), UreB (beta) and UreC (alpha) subunits. Three heterotrimers associate to form the active enzyme. Requires Ni cation as cofactor. Post-translationally, carboxylation allows a single lysine to coordinate two nickel ions.

The protein localises to the cytoplasm. It catalyses the reaction urea + 2 H2O + H(+) = hydrogencarbonate + 2 NH4(+). It participates in nitrogen metabolism; urea degradation; CO(2) and NH(3) from urea (urease route): step 1/1. In Synechococcus sp. (strain WH7805), this protein is Urease subunit alpha.